We begin with the raw amino-acid sequence, 352 residues long: Nicotinate-nucleotide--dimethylbenzimidazole phosphoribosyltransferase (352 aa).

The Proton acceptor role is filled by E316.

Belongs to the CobT family.

It carries out the reaction 5,6-dimethylbenzimidazole + nicotinate beta-D-ribonucleotide = alpha-ribazole 5'-phosphate + nicotinate + H(+). It functions in the pathway nucleoside biosynthesis; alpha-ribazole biosynthesis; alpha-ribazole from 5,6-dimethylbenzimidazole: step 1/2. In terms of biological role, catalyzes the synthesis of alpha-ribazole-5'-phosphate from nicotinate mononucleotide (NAMN) and 5,6-dimethylbenzimidazole (DMB). The protein is Nicotinate-nucleotide--dimethylbenzimidazole phosphoribosyltransferase of Ruminiclostridium cellulolyticum (strain ATCC 35319 / DSM 5812 / JCM 6584 / H10) (Clostridium cellulolyticum).